Reading from the N-terminus, the 480-residue chain is Aspartyl/glutamyl-tRNA(Asn/Gln) amidotransferase subunit B (480 aa).

The protein belongs to the GatB/GatE family. GatB subfamily. In terms of assembly, heterotrimer of A, B and C subunits.

It catalyses the reaction L-glutamyl-tRNA(Gln) + L-glutamine + ATP + H2O = L-glutaminyl-tRNA(Gln) + L-glutamate + ADP + phosphate + H(+). The catalysed reaction is L-aspartyl-tRNA(Asn) + L-glutamine + ATP + H2O = L-asparaginyl-tRNA(Asn) + L-glutamate + ADP + phosphate + 2 H(+). Allows the formation of correctly charged Asn-tRNA(Asn) or Gln-tRNA(Gln) through the transamidation of misacylated Asp-tRNA(Asn) or Glu-tRNA(Gln) in organisms which lack either or both of asparaginyl-tRNA or glutaminyl-tRNA synthetases. The reaction takes place in the presence of glutamine and ATP through an activated phospho-Asp-tRNA(Asn) or phospho-Glu-tRNA(Gln). The sequence is that of Aspartyl/glutamyl-tRNA(Asn/Gln) amidotransferase subunit B from Caldicellulosiruptor saccharolyticus (strain ATCC 43494 / DSM 8903 / Tp8T 6331).